The sequence spans 375 residues: Tyrosine--tRNA ligase (375 aa).

Positions 37, 168, 172, 175, and 190 each coordinate L-tyrosine. A 'KMSKS' region motif is present at residues 251–255; sequence KMSKS. Residue Lys-254 participates in ATP binding.

Belongs to the class-I aminoacyl-tRNA synthetase family. TyrS type 4 subfamily. Homodimer.

It localises to the cytoplasm. It catalyses the reaction tRNA(Tyr) + L-tyrosine + ATP = L-tyrosyl-tRNA(Tyr) + AMP + diphosphate + H(+). Functionally, catalyzes the attachment of tyrosine to tRNA(Tyr) in a two-step reaction: tyrosine is first activated by ATP to form Tyr-AMP and then transferred to the acceptor end of tRNA(Tyr). The sequence is that of Tyrosine--tRNA ligase from Pyrococcus horikoshii (strain ATCC 700860 / DSM 12428 / JCM 9974 / NBRC 100139 / OT-3).